The sequence spans 108 residues: DNA-directed RNA polymerase III subunit RPC10 (108 aa).

The Zn(2+) site is built by C5, C8, C25, C28, C69, and C72. The segment at 5-28 (CPGCGNGLIVEEGQRCHRFACNTC) adopts a C4-type zinc-finger fold. A TFIIS-type zinc finger spans residues 65–107 (TAEPCPKCEHPRAYFMQLQTRYADEPMTTFYKCCNAQCGHRWR). A Hairpin motif is present at residues 88–89 (DE). Zn(2+) contacts are provided by C98 and C102.

It belongs to the archaeal RpoM/eukaryotic RPA12/RPB9/RPC11 RNA polymerase family. Component of the RNA polymerase III complex consisting of 17 subunits: a ten-subunit horseshoe-shaped catalytic core composed of POLR3A/RPC1, POLR3B/RPC2, POLR1C/RPAC1, POLR1D/RPAC2, POLR3K/RPC10, POLR2E/RPABC1, POLR2F/RPABC2, POLR2H/RPABC3, POLR2K/RPABC4 and POLR2L/RPABC5; a mobile stalk composed of two subunits POLR3H/RPC8 and CRCP/RPC9, protruding from the core and functioning primarily in transcription initiation; and additional subunits homologous to general transcription factors of the RNA polymerase II machinery, POLR3C/RPC3-POLR3F/RPC6-POLR3G/RPC7 heterotrimer required for transcription initiation and POLR3D/RPC4-POLR3E/RPC5 heterodimer involved in both transcription initiation and termination.

It localises to the nucleus. Functionally, core component of RNA polymerase III (Pol III) which synthesizes small non-coding RNAs using the four ribonucleoside triphosphates as substrates. Can mediate Pol I proofreading of the nascent RNA transcript. Anchors into the Pol III active site to constantly monitor transcription fidelity, cleaves mis-incorporated 5'-ribonucleotides and restarts the transcription process. Once Pol III reaches the poly(dT) termination signal, can induce Pol III clamp opening and transcription termination. Pol III plays an important role in sensing and limiting infection by intracellular bacteria and DNA viruses. Acts as a nuclear and cytosolic DNA sensor involved in innate immune response. Can sense non-self dsDNA that serves as template for transcription into dsRNA. The non-self RNA polymerase III transcripts, such as Epstein-Barr virus-encoded RNAs (EBERs) induce type I interferon and NF-kappa-B through the RIG-I pathway. The sequence is that of DNA-directed RNA polymerase III subunit RPC10 (POLR3K) from Bos taurus (Bovine).